The sequence spans 226 residues: RNA-binding protein 24 (226 aa).

An RRM domain is found at 11-88 (TKIFVGGLPY…RKANVNLAYL (78 aa)).

Its subcellular location is the nucleus. The protein resides in the cytoplasm. Multifunctional RNA-binding protein involved in the regulation of pre-mRNA splicing, mRNA stability and mRNA translation important for cell fate decision and differentiation. Plays a major role in pre-mRNA alternative splicing regulation. Mediates preferentially muscle-specific exon inclusion in numerous mRNAs important for striated cardiac and skeletal muscle cell differentiation. Binds to intronic splicing enhancer (ISE) composed of stretches of GU-rich motifs localized in flanking intron of exon that will be included by alternative splicing. Involved in embryonic stem cell (ESC) transition to cardiac cell differentiation by promoting pre-mRNA alternative splicing events of several pluripotency and/or differentiation genes. Plays a role in the regulation of mRNA stability and mRNA translation to which it is bound. Involved in myogenic differentiation by regulating myog levels. Binds to a huge amount of mRNAs. Required for embryonic heart development, sarcomer and M-band formation in striated muscles. This Xenopus tropicalis (Western clawed frog) protein is RNA-binding protein 24 (rbm24).